Here is a 287-residue protein sequence, read N- to C-terminus: Cell division protein ZipA (287 aa).

Methionine 1 is a topological domain (periplasmic). A helical transmembrane segment spans residues 2–22 (EIGLREWLIVIGIIVIAGILF). Topologically, residues 23-287 (DGWRRMRGGK…FERRALTQKR (265 aa)) are cytoplasmic. A disordered region spans residues 70 to 143 (LDEHDLPSMS…APRQSVNDQP (74 aa)).

The protein belongs to the ZipA family. As to quaternary structure, interacts with FtsZ via their C-terminal domains.

It is found in the cell inner membrane. Its function is as follows. Essential cell division protein that stabilizes the FtsZ protofilaments by cross-linking them and that serves as a cytoplasmic membrane anchor for the Z ring. Also required for the recruitment to the septal ring of downstream cell division proteins. This is Cell division protein ZipA from Pseudomonas fluorescens (strain SBW25).